The primary structure comprises 100 residues: MNNATFNCTNINPITHIRGSIIITICVSLIVILIVFGCIAKIFINKNNCTNNVIRVHKRIKCPDCEPFCNKRDDISTPRAGVDIPSFILPGLNLSEGTPN.

Over 1-18 (MNNATFNCTNINPITHIR) the chain is Virion surface. N-linked (GlcNAc...) asparagine; by host glycans are attached at residues N3 and N7. Residues 19–40 (GSIIITICVSLIVILIVFGCIA) traverse the membrane as a helical; Signal-anchor for type III membrane protein segment. Residues 41-100 (KIFINKNNCTNNVIRVHKRIKCPDCEPFCNKRDDISTPRAGVDIPSFILPGLNLSEGTPN) lie on the Intravirion side of the membrane.

Belongs to the influenza viruses type B glycoprotein NB family. In terms of assembly, dimer.

The protein resides in the virion membrane. Functionally, putative viral proton channel. May play a role in virus entry. The protein is Glycoprotein NB (NB) of Influenza B virus (strain B/Lee/1940).